The primary structure comprises 295 residues: Beta-lactamase-like protein 2 homolog (295 aa).

Zn(2+) is bound by residues His79, His81, Asp83, His84, His141, Asp160, and His195.

The protein belongs to the metallo-beta-lactamase superfamily. Glyoxalase II family.

The protein is Beta-lactamase-like protein 2 homolog of Caenorhabditis elegans.